We begin with the raw amino-acid sequence, 299 residues long: B3 domain-containing transcription factor NGA2 (299 aa).

The disordered stretch occupies residues 1–21; sequence MNQEDKEKPIEEASSSMEREH. A DNA-binding region (TF-B3) is located at residues 23 to 129; it reads FDKVVTPSDV…KLYIDWRRRP (107 aa). Residues 226-249 are disordered; the sequence is GGGGSVNSTEEESSSSGGSIPRGR.

The protein resides in the nucleus. In terms of biological role, regulates lateral organ growth. Functionally redundant with NGA1, NGA3 and NGA4. The protein is B3 domain-containing transcription factor NGA2 (NGA2) of Arabidopsis thaliana (Mouse-ear cress).